Reading from the N-terminus, the 565-residue chain is Tetratricopeptide repeat protein 39A (565 aa).

3 TPR repeats span residues 271 to 304 (AIFL…QQVW), 461 to 494 (CLIQ…EKKL), and 502 to 535 (PNAL…YKVY).

Belongs to the TTC39 family.

This Danio rerio (Zebrafish) protein is Tetratricopeptide repeat protein 39A (ttc39a).